We begin with the raw amino-acid sequence, 259 residues long: Protein-L-isoaspartate O-methyltransferase 1 (259 aa).

S109 is an active-site residue.

Belongs to the methyltransferase superfamily. L-isoaspartyl/D-aspartyl protein methyltransferase family.

The protein localises to the cytoplasm. It carries out the reaction [protein]-L-isoaspartate + S-adenosyl-L-methionine = [protein]-L-isoaspartate alpha-methyl ester + S-adenosyl-L-homocysteine. In terms of biological role, catalyzes the methyl esterification of L-isoaspartyl residues in peptides and proteins that result from spontaneous decomposition of normal L-aspartyl and L-asparaginyl residues. It plays a role in the repair and/or degradation of damaged proteins. The chain is Protein-L-isoaspartate O-methyltransferase 1 from Cupriavidus necator (strain ATCC 17699 / DSM 428 / KCTC 22496 / NCIMB 10442 / H16 / Stanier 337) (Ralstonia eutropha).